A 436-amino-acid chain; its full sequence is 3-ketoacyl-CoA thiolase (436 aa).

Residue Cys99 is the Acyl-thioester intermediate of the active site. Residues His392 and Cys422 each act as proton acceptor in the active site.

It belongs to the thiolase-like superfamily. Thiolase family. Heterotetramer of two alpha chains (FadJ) and two beta chains (FadI).

Its subcellular location is the cytoplasm. The enzyme catalyses an acyl-CoA + acetyl-CoA = a 3-oxoacyl-CoA + CoA. Its pathway is lipid metabolism; fatty acid beta-oxidation. Catalyzes the final step of fatty acid oxidation in which acetyl-CoA is released and the CoA ester of a fatty acid two carbons shorter is formed. The polypeptide is 3-ketoacyl-CoA thiolase (Citrobacter koseri (strain ATCC BAA-895 / CDC 4225-83 / SGSC4696)).